Here is a 148-residue protein sequence, read N- to C-terminus: Aspartate 1-decarboxylase (148 aa).

Catalysis depends on serine 25, which acts as the Schiff-base intermediate with substrate; via pyruvic acid. Residue serine 25 is modified to Pyruvic acid (Ser). Threonine 57 is a substrate binding site. The active-site Proton donor is the tyrosine 58. Glycine 73–alanine 75 is a binding site for substrate.

Belongs to the PanD family. Heterooctamer of four alpha and four beta subunits. It depends on pyruvate as a cofactor. In terms of processing, is synthesized initially as an inactive proenzyme, which is activated by self-cleavage at a specific serine bond to produce a beta-subunit with a hydroxyl group at its C-terminus and an alpha-subunit with a pyruvoyl group at its N-terminus.

The protein resides in the cytoplasm. The catalysed reaction is L-aspartate + H(+) = beta-alanine + CO2. Its pathway is cofactor biosynthesis; (R)-pantothenate biosynthesis; beta-alanine from L-aspartate: step 1/1. Functionally, catalyzes the pyruvoyl-dependent decarboxylation of aspartate to produce beta-alanine. In Rhodococcus jostii (strain RHA1), this protein is Aspartate 1-decarboxylase.